Consider the following 436-residue polypeptide: 3-ketoacyl-CoA thiolase (436 aa).

C99 acts as the Acyl-thioester intermediate in catalysis. Catalysis depends on proton acceptor residues H392 and C422.

It belongs to the thiolase-like superfamily. Thiolase family. In terms of assembly, heterotetramer of two alpha chains (FadJ) and two beta chains (FadI).

Its subcellular location is the cytoplasm. It carries out the reaction an acyl-CoA + acetyl-CoA = a 3-oxoacyl-CoA + CoA. It functions in the pathway lipid metabolism; fatty acid beta-oxidation. Functionally, catalyzes the final step of fatty acid oxidation in which acetyl-CoA is released and the CoA ester of a fatty acid two carbons shorter is formed. The sequence is that of 3-ketoacyl-CoA thiolase from Yersinia pseudotuberculosis serotype O:1b (strain IP 31758).